The chain runs to 359 residues: 3-isopropylmalate dehydrogenase (359 aa).

77-88 (GPKWGTGDVRPE) serves as a coordination point for NAD(+). Substrate contacts are provided by R95, R105, R134, and D223. Mg(2+) is bound by residues D223, D248, and D252. 287 to 298 (GSAPDLPAGKVN) is an NAD(+) binding site.

This sequence belongs to the isocitrate and isopropylmalate dehydrogenases family. Homodimer. Mg(2+) serves as cofactor. Mn(2+) is required as a cofactor.

The protein resides in the cytoplasm. The catalysed reaction is (2R,3S)-3-isopropylmalate + NAD(+) = 4-methyl-2-oxopentanoate + CO2 + NADH. The protein operates within amino-acid biosynthesis; L-leucine biosynthesis; L-leucine from 3-methyl-2-oxobutanoate: step 3/4. Functionally, catalyzes the oxidation of 3-carboxy-2-hydroxy-4-methylpentanoate (3-isopropylmalate) to 3-carboxy-4-methyl-2-oxopentanoate. The product decarboxylates to 4-methyl-2 oxopentanoate. In Diutina rugosa (Yeast), this protein is 3-isopropylmalate dehydrogenase (LEU2).